The following is a 162-amino-acid chain: uncharacterized protein (162 aa).

The signal sequence occupies residues 1-18; that stretch reads MRKTFLTLLCVSSAIAHA.

It belongs to the fimbrial protein family.

Part of the yfcOPQRSUV fimbrial operon. Could contribute to adhesion to various surfaces in specific environmental niches. Increases adhesion to eukaryotic T24 bladder epithelial cells in the absence of fim genes. This is an uncharacterized protein from Escherichia coli (strain K12).